The chain runs to 465 residues: Antithrombin-III (465 aa).

An N-terminal signal peptide occupies residues 1-32; it reads MYSPGAGSGAAGERKLCLLSLLLIGALGCAIC. Intrachain disulfides connect cysteine 41–cysteine 161 and cysteine 54–cysteine 128. The residue at position 64 (threonine 64) is a Phosphothreonine. Residue serine 69 is modified to Phosphoserine. Position 82 (tryptophan 82) interacts with heparin. An N-linked (GlcNAc...) asparagine glycan is attached at asparagine 129. Arginine 162 contributes to the heparin binding site. A glycan (N-linked (GlcNAc...) asparagine) is linked at asparagine 168. Residue arginine 178 participates in heparin binding. 2 N-linked (GlcNAc...) asparagine glycosylation sites follow: asparagine 188 and asparagine 225. Cysteines 280 and 463 form a disulfide.

Belongs to the serpin family. As to quaternary structure, forms protease inhibiting heterodimer with TMPRSS7. In terms of processing, phosphorylated by FAM20C in the extracellular medium. In terms of tissue distribution, plasma.

The protein localises to the secreted. It localises to the extracellular space. Its function is as follows. Most important serine protease inhibitor in plasma that regulates the blood coagulation cascade. AT-III inhibits thrombin, matriptase-3/TMPRSS7, as well as factors IXa, Xa and XIa. Its inhibitory activity is greatly enhanced in the presence of heparin. This Mus musculus (Mouse) protein is Antithrombin-III (Serpinc1).